The primary structure comprises 159 residues: Phosphopantetheine adenylyltransferase (159 aa).

Residue threonine 9 coordinates substrate. ATP-binding positions include 9-10 and histidine 17; that span reads TF. Residues lysine 41, leucine 73, and arginine 87 each contribute to the substrate site. ATP contacts are provided by residues 88-90, glutamate 98, and 123-129; these read GLR and YSYISST.

This sequence belongs to the bacterial CoaD family. In terms of assembly, homohexamer. It depends on Mg(2+) as a cofactor.

It is found in the cytoplasm. The catalysed reaction is (R)-4'-phosphopantetheine + ATP + H(+) = 3'-dephospho-CoA + diphosphate. Its pathway is cofactor biosynthesis; coenzyme A biosynthesis; CoA from (R)-pantothenate: step 4/5. Its function is as follows. Reversibly transfers an adenylyl group from ATP to 4'-phosphopantetheine, yielding dephospho-CoA (dPCoA) and pyrophosphate. This is Phosphopantetheine adenylyltransferase from Azotobacter vinelandii (strain DJ / ATCC BAA-1303).